The sequence spans 285 residues: Enterobactin synthase component B (285 aa).

Positions 2–213 (AIPKLQAYAL…EELLPAPIPA (212 aa)) are isochorismatase. A Carrier domain is found at 209 to 284 (APIPASKAAL…AWWKLLSREV (76 aa)). Mg(2+)-binding residues include D227, G242, and D244. S245 carries the post-translational modification O-(pantetheine 4'-phosphoryl)serine.

The protein in the N-terminal section; belongs to the isochorismatase family. Proteins EntB, EntD, EntE, and EntF form a multienzyme complex called enterobactin synthase. Homodimer. Also forms a specific pairwise interaction with EntC; this interaction likely facilitates substrate channeling to connect the EntB and EntC active sites. Mg(2+) serves as cofactor. Post-translationally, 4'-phosphopantetheine is transferred from CoA to a specific serine of apo-EntB by EntD. Holo-EntB so formed is then acylated with 2,3-dihydroxybenzoate in a reaction catalyzed by EntE.

Its subcellular location is the cytoplasm. It carries out the reaction 3 2,3-dihydroxybenzoate + 3 L-serine + 6 ATP = enterobactin + 6 AMP + 6 diphosphate + 4 H(+). The catalysed reaction is isochorismate + H2O = (2S,3S)-2,3-dihydroxy-2,3-dihydrobenzoate + pyruvate. The protein operates within siderophore biosynthesis; enterobactin biosynthesis. In terms of biological role, involved in the biosynthesis of the siderophore enterobactin (enterochelin), which is a macrocyclic trimeric lactone of N-(2,3-dihydroxybenzoyl)-serine. The serine trilactone serves as a scaffolding for the three catechol functionalities that provide hexadentate coordination for the tightly ligated iron(3+) atoms. EntB is a bifunctional protein that serves as an isochorismate lyase and an aryl carrier protein (ArCP). Catalyzes the conversion of isochorismate to 2,3-dihydro-2,3-dihydroxybenzoate (2,3-diDHB), the precursor of 2,3-dihydroxybenzoate (DHB). In the enterobactin assembly, EntB functions as an aryl carrier protein phosphopantetheinylated near the C terminus by EntD to yield holo-EntB, which is then acylated by EntE with 2,3-dihydroxybenzoyl-AMP to form DHB-holo-EntB. Then this product will serve in the formation of the amide bond between 2,3-dihydroxybenzoate (DHB) and L-serine. This is Enterobactin synthase component B from Escherichia coli O157:H7.